The following is a 751-amino-acid chain: Catalase-peroxidase 1 (751 aa).

Residues 1–11 are compositionally biased toward basic and acidic residues; that stretch reads MTDKQHTRSVS. Positions 1–31 are disordered; sequence MTDKQHTRSVSESENPAIPSPTPKVSRPRRN. A cross-link (tryptophyl-tyrosyl-methioninium (Trp-Tyr) (with M-251)) is located at residues 103–225; that stretch reads WHAAGTYRIA…LANVQMGLIY (123 aa). Residue His-104 is the Proton acceptor of the active site. The tryptophyl-tyrosyl-methioninium (Tyr-Met) (with W-103) cross-link spans 225-251; that stretch reads YVNPEGPGGNPDPLAAARDIRETFARM. His-266 contributes to the heme b binding site. Residues 345–375 are disordered; that stretch reads AGAKQWKPKNPEANDTVPDAHGASRRHSPTM.

Belongs to the peroxidase family. Peroxidase/catalase subfamily. In terms of assembly, homodimer or homotetramer. Heme b serves as cofactor. Post-translationally, formation of the three residue Trp-Tyr-Met cross-link is important for the catalase, but not the peroxidase activity of the enzyme.

The catalysed reaction is H2O2 + AH2 = A + 2 H2O. It catalyses the reaction 2 H2O2 = O2 + 2 H2O. Bifunctional enzyme with both catalase and broad-spectrum peroxidase activity. The sequence is that of Catalase-peroxidase 1 from Cupriavidus pinatubonensis (strain JMP 134 / LMG 1197) (Cupriavidus necator (strain JMP 134)).